The following is a 381-amino-acid chain: Succinyl-diaminopimelate desuccinylase (381 aa).

His-69 lines the Zn(2+) pocket. Asp-71 is a catalytic residue. Zn(2+) is bound at residue Asp-103. Residue Glu-137 is the Proton acceptor of the active site. Positions 138, 166, and 355 each coordinate Zn(2+).

Belongs to the peptidase M20A family. DapE subfamily. Homodimer. It depends on Zn(2+) as a cofactor. Co(2+) serves as cofactor.

The enzyme catalyses N-succinyl-(2S,6S)-2,6-diaminopimelate + H2O = (2S,6S)-2,6-diaminopimelate + succinate. It functions in the pathway amino-acid biosynthesis; L-lysine biosynthesis via DAP pathway; LL-2,6-diaminopimelate from (S)-tetrahydrodipicolinate (succinylase route): step 3/3. Its function is as follows. Catalyzes the hydrolysis of N-succinyl-L,L-diaminopimelic acid (SDAP), forming succinate and LL-2,6-diaminopimelate (DAP), an intermediate involved in the bacterial biosynthesis of lysine and meso-diaminopimelic acid, an essential component of bacterial cell walls. The chain is Succinyl-diaminopimelate desuccinylase from Rickettsia africae (strain ESF-5).